A 499-amino-acid polypeptide reads, in one-letter code: Glucosylglycerol-phosphate synthase (499 aa).

The protein belongs to the glycosyltransferase 20 family. Interacts with GGP-P. In terms of processing, seems to be degraded, at least in vitro, by FtsH2. In an ftsH2 disruption strain inactive GGPS accumulates.

The protein localises to the cytoplasm. The enzyme catalyses ADP-alpha-D-glucose + sn-glycerol 3-phosphate = 2-O-(alpha-D-glucopyranosyl)-sn-glycerol 3-phosphate + ADP + H(+). It participates in glycan metabolism; glucosylglycerol biosynthesis. Functionally, involved in salt tolerance by producing GG-phosphate from ADP-glucose and glycerol-3-phosphate (G3P), an intermediate in the synthesis of the osmolyte glucosylglycerol (GG). The protein is Glucosylglycerol-phosphate synthase (ggpS) of Synechocystis sp. (strain ATCC 27184 / PCC 6803 / Kazusa).